The primary structure comprises 367 residues: 4-hydroxy-3-methylbut-2-en-1-yl diphosphate synthase (flavodoxin) (367 aa).

4 residues coordinate [4Fe-4S] cluster: Cys270, Cys273, Cys305, and Glu312.

The protein belongs to the IspG family. [4Fe-4S] cluster is required as a cofactor.

The catalysed reaction is (2E)-4-hydroxy-3-methylbut-2-enyl diphosphate + oxidized [flavodoxin] + H2O + 2 H(+) = 2-C-methyl-D-erythritol 2,4-cyclic diphosphate + reduced [flavodoxin]. It participates in isoprenoid biosynthesis; isopentenyl diphosphate biosynthesis via DXP pathway; isopentenyl diphosphate from 1-deoxy-D-xylulose 5-phosphate: step 5/6. Its function is as follows. Converts 2C-methyl-D-erythritol 2,4-cyclodiphosphate (ME-2,4cPP) into 1-hydroxy-2-methyl-2-(E)-butenyl 4-diphosphate. The sequence is that of 4-hydroxy-3-methylbut-2-en-1-yl diphosphate synthase (flavodoxin) from Pasteurella multocida (strain Pm70).